The following is a 228-amino-acid chain: Ankyrin repeat domain-containing protein 46 (228 aa).

4 ANK repeats span residues 11–40 (QTNV…DPNI), 44–74 (RGRT…PLAT), 77–103 (QGNT…KIDI), and 107–138 (QGAT…EVKG). A helical transmembrane segment spans residues 195-215 (VLLLILVIALLSLGIAYYVSG).

Its subcellular location is the membrane. The polypeptide is Ankyrin repeat domain-containing protein 46 (Ankrd46) (Rattus norvegicus (Rat)).